The chain runs to 369 residues: Histidinol-phosphate aminotransferase (369 aa).

An N6-(pyridoxal phosphate)lysine modification is found at Lys223.

This sequence belongs to the class-II pyridoxal-phosphate-dependent aminotransferase family. Histidinol-phosphate aminotransferase subfamily. In terms of assembly, homodimer. Requires pyridoxal 5'-phosphate as cofactor.

The catalysed reaction is L-histidinol phosphate + 2-oxoglutarate = 3-(imidazol-4-yl)-2-oxopropyl phosphate + L-glutamate. It participates in amino-acid biosynthesis; L-histidine biosynthesis; L-histidine from 5-phospho-alpha-D-ribose 1-diphosphate: step 7/9. This Shouchella clausii (strain KSM-K16) (Alkalihalobacillus clausii) protein is Histidinol-phosphate aminotransferase.